Here is a 382-residue protein sequence, read N- to C-terminus: Sulfate adenylyltransferase (382 aa).

Belongs to the sulfate adenylyltransferase family.

The catalysed reaction is sulfate + ATP + H(+) = adenosine 5'-phosphosulfate + diphosphate. It participates in sulfur metabolism; hydrogen sulfide biosynthesis; sulfite from sulfate: step 1/3. The sequence is that of Sulfate adenylyltransferase from Staphylothermus marinus (strain ATCC 43588 / DSM 3639 / JCM 9404 / F1).